A 286-amino-acid polypeptide reads, in one-letter code: Prepilin leader peptidase/N-methyltransferase (286 aa).

The chain crosses the membrane as a helical span at residues 11 to 31 (LGIFFVGLFSLMVGSFLNVVI). Residues Cys-74, Cys-77, Cys-99, and Cys-102 each contribute to the Zn(2+) site. Transmembrane regions (helical) follow at residues 106–126 (ISARYLLVELLTAALSVIVAF), 132–152 (LSLGFALVFTWTLIALCFIDA), 161–181 (LTLPLLWLGILAALFNVFINL), 185–205 (VIGAMIGYLSLWSVYWLFKLI), 231–251 (LPIILFSAAILGMIYALGIGL), and 257–277 (MPFGPFLAIAGWLTFLYGAQI).

This sequence belongs to the peptidase A24 family. The cofactor is Zn(2+).

It is found in the cell inner membrane. It carries out the reaction Typically cleaves a -Gly-|-Phe- bond to release an N-terminal, basic peptide of 5-8 residues from type IV prepilin, and then N-methylates the new N-terminal amino group, the methyl donor being S-adenosyl-L-methionine.. In terms of biological role, plays an essential role in type IV pili and type II pseudopili formation by proteolytically removing the leader sequence from substrate proteins and subsequently monomethylating the alpha-amino group of the newly exposed N-terminal phenylalanine. The protein is Prepilin leader peptidase/N-methyltransferase (fimP) of Dichelobacter nodosus (Bacteroides nodosus).